A 314-amino-acid chain; its full sequence is Citrate/oxoglutarate carrier protein (314 aa).

3 Solcar repeats span residues 18-100, 107-199, and 217-301; these read VSFS…EAEY, LNNF…VEDG, and EKIG…AKEF. The next 5 helical transmembrane spans lie at 23 to 44, 77 to 97, 111 to 127, 178 to 198, and 218 to 238; these read ILLG…LEVV, IPWA…VSAE, ASGI…QAYL, VAIR…LVED, and KIGA…IEVI. The DNA-binding element occupies 246–259; sequence KEDPNRPKNLTVGK. The chain crosses the membrane as a helical span at residues 273–294; that stretch reads LYRGVTPRIGLGIWQTVFMVGF.

This sequence belongs to the mitochondrial carrier (TC 2.A.29) family.

It is found in the mitochondrion inner membrane. The protein resides in the mitochondrion matrix. The protein localises to the mitochondrion nucleoid. With respect to regulation, strongly inhibited by mersalyl, p-chloromercuribenzenesulfonate, mercuric chloride, N-ethylmaleimide, pyridoxal 5'-phosphate, bathophenanthroline, and tannic acid. Partially inhibited by alpha-cyanocinnamate and bromescol purple. Weakly inhibited by butylmalonate and phenylsuccinate. Not inhibited by 1,2,3-benzenetricarboxylate or carboxyatractyloside. In terms of biological role, mitochondrial antiporter which catalyzes the transport of citrate and oxoglutarate across the membrane. Also shows specificity for oxaloacetate, and to a lesser extent succinate and fumarate. Transports isocitrate, cis-aconitate and L-malate with very low efficiency. Does not show uniporter activity. Helps to maintain normal citrate levels and NADPH/NADP(+) ratios under conditions of oxidative stress. In addition, associates with the mitochondrial nucleoid and binds DNA in vitro, although the relevance of these data in vivo is unclear. This is Citrate/oxoglutarate carrier protein (YHM2) from Saccharomyces cerevisiae (strain ATCC 204508 / S288c) (Baker's yeast).